Here is a 537-residue protein sequence, read N- to C-terminus: MGGAGILLLLLAGAGVVVAWRPPKGKCPLRCSCSKDSALCEGSPDLPVSFSPTLLSLSLVRTGVTQLKAGSFLRIPSLHLLLFTSNSFSVIEDDAFAGLSHLQYLFIEDNEIGSISKNALRGLRSLTHLSLANNHLETLPRFLFRGLDTLTHVDLRGNPFQCDCRVLWLLQWMPTVNASVGTGACAGPASLSHMQLHHLDPKTFKCRAIELSWFQTVGESALSVEPFSYQGEPHIVLAQPFAGRCLILSWDYSLQRFRPEEELPAASVVSCKPLVLGPSLFVLAARLWGGSQLWARPSPGLRLAPTQTLAPRRLLRPNDAELLWLEGQPCFVVADASKAGSTTLLCRDGPGFYPHQSLHAWHRDTDAEALELDGRPHLLLASASQRPVLFHWTGGRFERRTDIPEAEDVYATRHFQAGGDVFLCLTRYIGDSMVMRWDGSMFRLLQQLPSRGAHVFQPLLIARDQLAILGSDFAFSQVLRLEPDKGLLEPLQELGPPALVAPRAFAHITMAGRRFLFAACFKGPTQIYQHHEIDLSA.

The first 19 residues, 1–19, serve as a signal peptide directing secretion; it reads MGGAGILLLLLAGAGVVVA. LRR repeat units lie at residues 53–74, 77–98, 101–122, and 125–146; these read TLLS…SFLR, SLHL…AFAG, HLQY…ALRG, and SLTH…LFRG. The LRRCT domain maps to 158–208; that stretch reads NPFQCDCRVLWLLQWMPTVNASVGTGACAGPASLSHMQLHHLDPKTFKCRA. N-linked (GlcNAc...) asparagine glycosylation is present at Asn-177. EAR repeat units lie at residues 210–252, 256–298, 302–349, 351–394, 396–439, 441–483, and 487–532; these read ELSW…SWDY, RFRP…ARPS, RLAP…CRDG, GFYP…HWTG, RFER…RWDG, MFRL…RLEP, and LLEP…QHHE.

In terms of assembly, can bind to ADAM11, ADAM22 and ADAM23. Widely expressed, with highest expression in brain.

It localises to the secreted. Its function is as follows. Component of Schwann cell signaling pathway(s) that controls axon segregation and myelin formation. This chain is Leucine-rich repeat LGI family member 4 (LGI4), found in Homo sapiens (Human).